The primary structure comprises 206 residues: Small ribosomal subunit protein uS4 (206 aa).

The S4 RNA-binding domain occupies 98–158; sequence RRLDNVVFRL…EKSRSMELIK (61 aa).

The protein belongs to the universal ribosomal protein uS4 family. Part of the 30S ribosomal subunit. Contacts protein S5. The interaction surface between S4 and S5 is involved in control of translational fidelity.

In terms of biological role, one of the primary rRNA binding proteins, it binds directly to 16S rRNA where it nucleates assembly of the body of the 30S subunit. Its function is as follows. With S5 and S12 plays an important role in translational accuracy. The chain is Small ribosomal subunit protein uS4 from Thermoanaerobacter pseudethanolicus (strain ATCC 33223 / 39E) (Clostridium thermohydrosulfuricum).